Consider the following 494-residue polypeptide: Glycerol kinase (494 aa).

Thr-13 is a binding site for ADP. 3 residues coordinate ATP: Thr-13, Thr-14, and Ser-15. Thr-13 is a binding site for sn-glycerol 3-phosphate. Arg-17 is a binding site for ADP. 4 residues coordinate sn-glycerol 3-phosphate: Arg-83, Glu-84, Tyr-135, and Asp-244. Residues Arg-83, Glu-84, Tyr-135, Asp-244, and Gln-245 each contribute to the glycerol site. ADP contacts are provided by Thr-266 and Gly-309. Positions 266, 309, 313, and 410 each coordinate ATP. Residues Gly-410 and Asn-414 each contribute to the ADP site.

The protein belongs to the FGGY kinase family.

The catalysed reaction is glycerol + ATP = sn-glycerol 3-phosphate + ADP + H(+). It participates in polyol metabolism; glycerol degradation via glycerol kinase pathway; sn-glycerol 3-phosphate from glycerol: step 1/1. Its activity is regulated as follows. Inhibited by fructose 1,6-bisphosphate (FBP). Functionally, key enzyme in the regulation of glycerol uptake and metabolism. Catalyzes the phosphorylation of glycerol to yield sn-glycerol 3-phosphate. This is Glycerol kinase from Shewanella sp. (strain MR-4).